The chain runs to 434 residues: Glycylpeptide N-tetradecanoyltransferase 1 (434 aa).

The disordered stretch occupies residues 1 to 24 (MADNNSPPGSVEQKADQIVEANPL). N-acetylalanine is present on A2. Tetradecanoyl-CoA is bound by residues 48–51 (HKFW), 184–186 (LCV), and 192–196 (SKRLA). L434 serves as the catalytic Proton acceptor; via carboxylate.

Belongs to the NMT family. Expressed ubiquitously, with higher levels in young tissues (at protein level).

It is found in the cytoplasm. The enzyme catalyses N-terminal glycyl-[protein] + tetradecanoyl-CoA = N-tetradecanoylglycyl-[protein] + CoA + H(+). Its function is as follows. Adds a myristoyl group to the N-terminal glycine residue of certain cellular proteins. Can also use decanoyl-CoA and lauroyl-CoA as substrates. The chain is Glycylpeptide N-tetradecanoyltransferase 1 (NMT1) from Arabidopsis thaliana (Mouse-ear cress).